The primary structure comprises 252 residues: tRNA pseudouridine synthase A (252 aa).

Asp54 acts as the Nucleophile in catalysis. Tyr113 lines the substrate pocket.

Belongs to the tRNA pseudouridine synthase TruA family. In terms of assembly, homodimer.

It catalyses the reaction uridine(38/39/40) in tRNA = pseudouridine(38/39/40) in tRNA. Its function is as follows. Formation of pseudouridine at positions 38, 39 and 40 in the anticodon stem and loop of transfer RNAs. This Bacteroides fragilis (strain ATCC 25285 / DSM 2151 / CCUG 4856 / JCM 11019 / LMG 10263 / NCTC 9343 / Onslow / VPI 2553 / EN-2) protein is tRNA pseudouridine synthase A.